Consider the following 467-residue polypeptide: Asparagine--tRNA ligase (467 aa).

It belongs to the class-II aminoacyl-tRNA synthetase family. As to quaternary structure, homodimer.

Its subcellular location is the cytoplasm. The catalysed reaction is tRNA(Asn) + L-asparagine + ATP = L-asparaginyl-tRNA(Asn) + AMP + diphosphate + H(+). The sequence is that of Asparagine--tRNA ligase from Actinobacillus pleuropneumoniae serotype 3 (strain JL03).